The following is a 623-amino-acid chain: Lamin-B2.L (623 aa).

The segment covering 1 to 18 (MATTTPSRSTRSSMQSPA) has biased composition (low complexity). The segment at 1–30 (MATTTPSRSTRSSMQSPARGTSTPLSPTRI) is disordered. Positions 2–27 (ATTTPSRSTRSSMQSPARGTSTPLSP) are head. A compositionally biased stretch (polar residues) spans 19–30 (RGTSTPLSPTRI). Ser26 is subject to Phosphoserine. A coil 1A region spans residues 28–64 (TRISRLQEKEELRHLNDRLAVYIDRVRALELENDRLM). An IF rod domain is found at 35–391 (EKEELRHLND…KLLEGEEERL (357 aa)). Residues 64-74 (MVKISEKEEVT) form a linker 1 region. The coil 1B stretch occupies residues 75 to 211 (TREVSGIKNL…QSLQEEMDFR (137 aa)). The segment at 212-235 (KNIYEEESRETRKRHERRIVEVDR) is linker 2. The coil 2 stretch occupies residues 236–378 (GHHYDYESKL…VKLALDLEIN (143 aa)). The tail stretch occupies residues 380-592 (YRKLLEGEEE…VTKSVLRNVE (213 aa)). Disordered regions lie at residues 388–473 (EERL…LSQQ) and 591–623 (VEEE…CSVM). Ser396 carries the phosphoserine modification. Low complexity predominate over residues 398-416 (ESRVTVSRATSSSSSATRT). The Nuclear localization signal signature appears at 420-425 (KRRRVE). The span at 443–473 (LGSSRITASEGSSRTITSGQSSTTRFHLSQQ) shows a compositional bias: polar residues. The 118-residue stretch at 468–585 (FHLSQQASAT…EEVAVRTVTK (118 aa)) folds into the LTD domain. Acidic residues predominate over residues 592 to 604 (EEEEDEDADFGEE). Over residues 612 to 623 (DPRTTSRGCSVM) the composition is skewed to polar residues. At Cys620 the chain carries Cysteine methyl ester. Cys620 carries S-farnesyl cysteine lipidation. The propeptide at 621–623 (SVM) is removed in mature form.

This sequence belongs to the intermediate filament family. Post-translationally, phosphorylation plays a key role in lamin organization, subcellular localization and nuclear envelope disintegration. Phosphorylation by CDK1 at Ser-26 at the onset of mitosis drives lamin disassembly and nuclear envelope breakdown.

It is found in the nucleus lamina. The protein localises to the nucleus envelope. It localises to the nucleus. Its subcellular location is the nucleoplasm. The protein resides in the nucleus matrix. Its function is as follows. Lamins are intermediate filament proteins that assemble into a filamentous meshwork, and which constitute the major components of the nuclear lamina, a fibrous layer on the nucleoplasmic side of the inner nuclear membrane. Lamins provide a framework for the nuclear envelope, bridging the nuclear envelope and chromatin, thereby playing an important role in nuclear assembly, chromatin organization, nuclear membrane and telomere dynamics. The structural integrity of the lamina is strictly controlled by the cell cycle, as seen by the disintegration and formation of the nuclear envelope in prophase and telophase, respectively. In Xenopus laevis (African clawed frog), this protein is Lamin-B2.L (lmnb2.L).